The primary structure comprises 220 residues: Deoxyribose-phosphate aldolase (220 aa).

The active-site Proton donor/acceptor is Asp-89. Lys-151 (schiff-base intermediate with acetaldehyde) is an active-site residue. The active-site Proton donor/acceptor is the Lys-180.

It belongs to the DeoC/FbaB aldolase family. DeoC type 1 subfamily.

The protein resides in the cytoplasm. It carries out the reaction 2-deoxy-D-ribose 5-phosphate = D-glyceraldehyde 3-phosphate + acetaldehyde. It participates in carbohydrate degradation; 2-deoxy-D-ribose 1-phosphate degradation; D-glyceraldehyde 3-phosphate and acetaldehyde from 2-deoxy-alpha-D-ribose 1-phosphate: step 2/2. Functionally, catalyzes a reversible aldol reaction between acetaldehyde and D-glyceraldehyde 3-phosphate to generate 2-deoxy-D-ribose 5-phosphate. This is Deoxyribose-phosphate aldolase from Staphylococcus haemolyticus (strain JCSC1435).